Reading from the N-terminus, the 431-residue chain is Interleukin-11 receptor subunit alpha (431 aa).

Positions 1–23 (MSSSRSGLTRVLVAVATALVSSS) are cleaved as a signal peptide. Residues 24 to 371 (TPCPQAWGPP…DPLEQVAVLA (348 aa)) are Extracellular-facing. The region spanning 27–110 (PQAWGPPGVQ…FGGMVTLKLG (84 aa)) is the Ig-like C2-type domain. 3 disulfide bridges follow: Cys48-Cys94, Cys120-Cys130, and Cys170-Cys180. 2 Fibronectin type-III domains span residues 112–219 (PPAR…LRPD) and 220–317 (PPQG…TPST). Residue Asn127 is glycosylated (N-linked (GlcNAc...) asparagine). A disordered region spans residues 151-170 (KTLPGAESQRESPSTGPWPC). N-linked (GlcNAc...) asparagine glycosylation occurs at Asn194. The short motif at 304 to 308 (WSAWS) is the WSXWS motif element. The disordered stretch occupies residues 310–360 (EAWGTPSTGPLRDEVPDGSRGHEQKLEAAAQEDSPAPPSPSLQPDPRPLDH). Residues 320 to 335 (LRDEVPDGSRGHEQKL) show a composition bias toward basic and acidic residues. Positions 344 to 355 (PAPPSPSLQPDP) are enriched in pro residues. Residues 372–392 (SLGIFSFLGLAVGALALGLWL) traverse the membrane as a helical segment. The Cytoplasmic portion of the chain corresponds to 393-431 (RLRRSGKDGPQKPGFLAPMIPGDKLPGIPNLQRTPENFS). Residues 402–431 (PQKPGFLAPMIPGDKLPGIPNLQRTPENFS) are disordered.

Belongs to the type I cytokine receptor family. Type 3 subfamily. On IL11 binding, forms a multimer complex with IL6ST/gp130. Post-translationally, a short soluble form is also released from the membrane by proteolysis. The sIL11RA is formed either by limited proteolysis of membrane-bound receptors, a process referred to as ectodomain shedding, or directly secreted from the cells after alternative mRNA splicing. mIL11RA is cleaved by the proteases ADAM10, ELANE and PRTN3.

The protein localises to the membrane. Its subcellular location is the secreted. In terms of biological role, receptor for interleukin-11 (IL11). The receptor systems for IL6, LIF, OSM, CNTF, IL11 and CT1 can utilize IL6ST for initiating signal transmission. The IL11/IL11RA/IL6ST complex may be involved in the control of proliferation and/or differentiation of skeletogenic progenitor or other mesenchymal cells. Essential for the normal development of craniofacial bones and teeth. Restricts suture fusion and tooth number. Functionally, soluble form of IL11 receptor (sIL11RA) that acts as an agonist of IL11 activity. The IL11:sIL11RA complex binds to IL6ST/gp130 on cell surfaces and induces signaling also on cells that do not express membrane-bound IL11RA in a process called IL11 trans-signaling. This chain is Interleukin-11 receptor subunit alpha, found in Rattus norvegicus (Rat).